The primary structure comprises 591 residues: Probable indole-3-acetic acid-amido synthetase GH3.11 (591 aa).

It belongs to the IAA-amido conjugating enzyme family. As to expression, expressed in etiolated and green seedlings, roots, callus and highly in flowers.

Functionally, may catalyze the synthesis of indole-3-acetic acid (IAA)-amino acid conjugates, providing a mechanism for the plant to cope with the presence of excess auxin. The chain is Probable indole-3-acetic acid-amido synthetase GH3.11 (GH3.11) from Oryza sativa subsp. japonica (Rice).